Here is a 128-residue protein sequence, read N- to C-terminus: Fumarate reductase subunit C (128 aa).

The next 3 helical transmembrane spans lie at 31-51, 67-87, and 106-126; these read ATCI…ISLG, VVIL…TLYV, and ILKN…LVLV.

This sequence belongs to the FrdC family. As to quaternary structure, part of an enzyme complex containing four subunits: a flavoprotein (FrdA), an iron-sulfur protein (FrdB), and two hydrophobic anchor proteins (FrdC and FrdD).

The protein resides in the cell inner membrane. Functionally, anchors the catalytic components of the fumarate reductase complex to the cell membrane, binds quinones. This Haemophilus ducreyi (strain 35000HP / ATCC 700724) protein is Fumarate reductase subunit C.